The primary structure comprises 141 residues: Lysozyme 1 (141 aa).

An N-terminal signal peptide occupies residues 1 to 19; that stretch reads MKFFIVLVAALALAAPAMG. One can recognise a C-type lysozyme domain in the interval 20–141; sequence KTFTRCSLAR…GSLPSINDCF (122 aa). 4 disulfides stabilise this stretch: Cys25-Cys140, Cys46-Cys130, Cys81-Cys97, and Cys93-Cys111. The active site involves Glu51. The N-linked (GlcNAc...) asparagine glycan is linked to Asn65. Asp69 is an active-site residue. Asn104 carries N-linked (GlcNAc...) asparagine glycosylation.

Belongs to the glycosyl hydrolase 22 family.

The enzyme catalyses Hydrolysis of (1-&gt;4)-beta-linkages between N-acetylmuramic acid and N-acetyl-D-glucosamine residues in a peptidoglycan and between N-acetyl-D-glucosamine residues in chitodextrins.. In terms of biological role, may not function as a self-defense protein, but as a digestive enzyme, probably in the gut of the insect body. Inactive towards Micrococcus luteus. Active toward glycol chitin. This Musca domestica (House fly) protein is Lysozyme 1.